The following is a 149-amino-acid chain: MPVDQEKLAKLHKLSAANKVGGTRRKINKKGNLYNNNDKDNTKLQAELHKLHPMTIENVAEANFFKKNGKVLHFNSAVVQIAPQCNLTMIHGQPKENTLNGLYPSVASQLGSQELEYLTGLAHNLENEQTVLDQLSDRCSETKQQVMNS.

Residues 38 to 103 enclose the NAC-A/B domain; the sequence is DKDNTKLQAE…PKENTLNGLY (66 aa).

The protein belongs to the NAC-beta family. Part of the nascent polypeptide-associated complex (NAC), consisting of EGD2 and either EGD1 or BTT1. NAC associates with ribosomes via EGD1 or BTT1.

The protein resides in the cytoplasm. It is found in the nucleus. Its function is as follows. Acts as a component of the nascent polypeptide-associated complex (NAC), which promotes mitochondrial protein import by enhancing productive ribosome interactions with the outer mitochondrial membrane. Also blocks the inappropriate interaction of ribosomes translating non-secretory nascent polypeptides with translocation sites in the membrane of the endoplasmic reticulum. BTT1 may act as a transcription factor that exert a negative effect on the expression of several genes that are transcribed by RNA polymerase II. This Saccharomyces cerevisiae (strain YJM789) (Baker's yeast) protein is Nascent polypeptide-associated complex subunit beta-2 (BTT1).